A 1184-amino-acid polypeptide reads, in one-letter code: DNA-directed RNA polymerase subunit beta' (1184 aa).

Positions 60, 62, 75, and 78 each coordinate Zn(2+). Positions 449, 451, and 453 each coordinate Mg(2+). Cys-794, Cys-867, Cys-874, and Cys-877 together coordinate Zn(2+).

The protein belongs to the RNA polymerase beta' chain family. In terms of assembly, the RNAP catalytic core consists of 2 alpha, 1 beta, 1 beta' and 1 omega subunit. When a sigma factor is associated with the core the holoenzyme is formed, which can initiate transcription. Mg(2+) serves as cofactor. The cofactor is Zn(2+).

The enzyme catalyses RNA(n) + a ribonucleoside 5'-triphosphate = RNA(n+1) + diphosphate. In terms of biological role, DNA-dependent RNA polymerase catalyzes the transcription of DNA into RNA using the four ribonucleoside triphosphates as substrates. This Thermoanaerobacter sp. (strain X514) protein is DNA-directed RNA polymerase subunit beta'.